The primary structure comprises 222 residues: Homing endonuclease I-ApeI (222 aa).

As to quaternary structure, probably functions as a monomer. The cofactor is Mg(2+). Requires Mn(2+) as cofactor.

Its function is as follows. Endonuclease involved in 16S rRNA intron I-alpha homing. Recognizes the minimal target 5'-GCAAGGCTGAAACTTAAAGG-3'; generates 4 base 3' protruding ends 5'-AAAC-3' and 5'-GTTT-3'. The protein is Homing endonuclease I-ApeI (apeI) of Aeropyrum pernix (strain ATCC 700893 / DSM 11879 / JCM 9820 / NBRC 100138 / K1).